A 4910-amino-acid chain; its full sequence is Midasin (4910 aa).

AAA-ATPase protomer stretches follow at residues Ile-305 to Phe-528 and Met-636 to Ile-975. Residues Gly-315–Thr-322 and Gly-653–Thr-660 contribute to the ATP site. Residues Val-695–Ile-803 form an interaction with RIX1 region. Residue Thr-1026 is modified to Phosphothreonine. 4 AAA-ATPase protomer regions span residues His-1054–Arg-1280, Lys-1345–Ile-1624, Arg-1732–Ile-1985, and Val-2036–His-2286. Residues Gly-1083–Thr-1090, Gly-1368–Thr-1375, Gly-1747–Thr-1754, and Gly-2054–Thr-2061 contribute to the ATP site. The segment at Glu-2372–Lys-4075 is linker. Position 2971 is a phosphoserine (Ser-2971). Disordered stretches follow at residues Ser-4045–Asp-4547, Ser-4555–Ile-4574, and Ser-4579–Ser-4600. Over residues Glu-4078–Gln-4088 the composition is skewed to acidic residues. Residues Asn-4089–Asp-4098 are compositionally biased toward basic and acidic residues. Residues Glu-4099–Ala-4154 are compositionally biased toward acidic residues. Basic and acidic residues predominate over residues Ile-4155 to Asp-4174. Acidic residues-rich tracts occupy residues Gly-4202–Glu-4244, Glu-4251–Met-4274, and Gly-4288–Leu-4358. Position 4353 is a phosphoserine (Ser-4353). The span at Lys-4359–Gly-4372 shows a compositional bias: basic and acidic residues. At Thr-4388 the chain carries Phosphothreonine. 2 stretches are compositionally biased toward basic and acidic residues: residues Asp-4435 to Ala-4447 and Leu-4481 to Glu-4495. A compositionally biased stretch (polar residues) spans Asn-4498–Thr-4516. The span at Ile-4517 to Glu-4531 shows a compositional bias: acidic residues. Residue Ser-4555 is modified to Phosphoserine. Basic and acidic residues predominate over residues Ile-4557–Lys-4570. The 196-residue stretch at Gln-4704–Ile-4899 folds into the VWFA domain.

This sequence belongs to the midasin family. As to quaternary structure, associates with pre-60S ribosomes in the nucleoplasm. Interacts (via its hexameric AAA ATPase ring) with the RIX1 complex (via RIX1); this interaction is crucial for recruitment of MDN1 to the pre-ribosomal particle. Interacts (via VWFA/MIDAS domain) with YTM1 (via UBL domain). Interacts (via VWFA/MIDAS domain) with RSA4 (via UBL domain).

Its subcellular location is the nucleus. The protein localises to the nucleolus. The protein resides in the nucleoplasm. Nuclear chaperone required for maturation and nuclear export of pre-60S ribosome subunits. Functions at successive maturation steps to remove ribosomal factors at critical transition points, first driving the exit of early pre-60S particles from the nucleolus and then driving late pre-60S particles from the nucleus. At an early stage in 60S maturation, mediates the dissociation of the NOP7 complex (YTM1-ERB1-NOP7) from early pre-60S particles, rendering them competent for export from the nucleolus to the nucleoplasm. Subsequently recruited to the nucleoplasmic particles through interaction with the RIX1 complex. This binding is only possible if the 5S RNP at the central protuberance has undergone the rotation to complete its maturation. After remodeling, removes the ribosome biogenesis factor RSA4 in an ATP hydrolysis-driven step from pre-60S ribosomal subunits, rendering them competent for export from the nucleoplasm to the cytoplasm. Activates the GTPase activity of NOG2, which disengages from the pre-60S particle upon GTP hydrolysis, thus freeing its binding site for the nuclear export factor NMD3. The protein is Midasin (MDN1) of Saccharomyces cerevisiae (strain ATCC 204508 / S288c) (Baker's yeast).